The sequence spans 161 residues: Regulator of ribonuclease activity A (161 aa).

This sequence belongs to the RraA family. Homotrimer. Binds to both RNA-binding sites in the C-terminal region of Rne and to RhlB.

It is found in the cytoplasm. Globally modulates RNA abundance by binding to RNase E (Rne) and regulating its endonucleolytic activity. Can modulate Rne action in a substrate-dependent manner by altering the composition of the degradosome. Modulates RNA-binding and helicase activities of the degradosome. The protein is Regulator of ribonuclease activity A of Tolumonas auensis (strain DSM 9187 / NBRC 110442 / TA 4).